The chain runs to 407 residues: Monooxygenase 2 (407 aa).

This sequence belongs to the 3-hydroxybenzoate 6-hydroxylase family. Monomer. Requires FAD as cofactor. In terms of tissue distribution, expressed in seeds, seedlings, roots, leaves, flowers, pollen and siliques.

The chain is Monooxygenase 2 from Arabidopsis thaliana (Mouse-ear cress).